A 340-amino-acid polypeptide reads, in one-letter code: Dual specificity protein phosphatase 12 (340 aa).

Position 1 is an N-acetylmethionine (M1). Residues 26 to 171 form the Tyrosine-protein phosphatase domain; the sequence is QMLEVQPGLY…LKLYQAMGYE (146 aa). The active-site Phosphocysteine intermediate is C115. 116–121 provides a ligand contact to substrate; sequence HAGVSR. Position 335 is a phosphoserine (S335).

Belongs to the protein-tyrosine phosphatase family. Non-receptor class dual specificity subfamily. As to quaternary structure, monomer. The cofactor is Zn(2+). As to expression, ubiquitous, highest expression in spleen, testis, ovary, and peripheral blood leukocytes and lower expression in liver and lung.

It localises to the nucleus. Its subcellular location is the cytoplasm. It is found in the cytosol. It carries out the reaction O-phospho-L-tyrosyl-[protein] + H2O = L-tyrosyl-[protein] + phosphate. The enzyme catalyses O-phospho-L-seryl-[protein] + H2O = L-seryl-[protein] + phosphate. The catalysed reaction is O-phospho-L-threonyl-[protein] + H2O = L-threonyl-[protein] + phosphate. Dual specificity phosphatase; can dephosphorylate both phosphotyrosine and phosphoserine or phosphothreonine residues. Can dephosphorylate glucokinase (in vitro). Has phosphatase activity with the synthetic substrate 6,8-difluoro-4-methylumbelliferyl phosphate and other in vitro substrates. In Homo sapiens (Human), this protein is Dual specificity protein phosphatase 12 (DUSP12).